The chain runs to 249 residues: Small ribosomal subunit protein uS2 (249 aa).

This sequence belongs to the universal ribosomal protein uS2 family.

This Listeria innocua serovar 6a (strain ATCC BAA-680 / CLIP 11262) protein is Small ribosomal subunit protein uS2.